The following is an 819-amino-acid chain: Myosin light chain kinase 3 (819 aa).

The tract at residues 146 to 460 (VPWRRGSPGD…PGVGNPEPEQ (315 aa)) is disordered. Ser-152 carries the post-translational modification Phosphoserine. 2 stretches are compositionally biased toward basic and acidic residues: residues 158-170 (EENK…EGAK) and 183-196 (DARE…KADV). The span at 307-318 (GPGPQCPGPPGL) shows a compositional bias: pro residues. Phosphoserine is present on residues Ser-355, Ser-401, and Ser-408. Positions 515 to 770 (VCQHEVLGGG…ATQCLKHEWL (256 aa)) constitute a Protein kinase domain. ATP-binding positions include 521–529 (LGGGRFGQV) and Lys-544. Asp-636 (proton acceptor) is an active-site residue.

Belongs to the protein kinase superfamily. CAMK Ser/Thr protein kinase family. Mg(2+) is required as a cofactor. Phosphorylated on serine residues.

It localises to the cytoplasm. It catalyses the reaction L-seryl-[myosin light chain] + ATP = O-phospho-L-seryl-[myosin light chain] + ADP + H(+). The enzyme catalyses L-threonyl-[myosin light chain] + ATP = O-phospho-L-threonyl-[myosin light chain] + ADP + H(+). Its function is as follows. Kinase that phosphorylates MYL2 in vitro. Promotes sarcomere formation in cardiomyocytes and increases cardiomyocyte contractility. The protein is Myosin light chain kinase 3 (MYLK3) of Pongo abelii (Sumatran orangutan).